A 307-amino-acid polypeptide reads, in one-letter code: Small ribosomal subunit biogenesis GTPase RsgA (307 aa).

Positions 1–20 are disordered; that stretch reads MPSEHPFSDGISTPNPKETM. The span at 10 to 20 shows a compositional bias: polar residues; sequence GISTPNPKETM. The CP-type G domain maps to 85-242; it reads RQDAWKTKLI…LIDSPGLQEF (158 aa). Residues 135 to 138 and 184 to 192 each bind GTP; these read NKAD and GQSGMGKST. Zn(2+) is bound by residues C266, C271, H273, and C279.

Belongs to the TRAFAC class YlqF/YawG GTPase family. RsgA subfamily. In terms of assembly, monomer. Associates with 30S ribosomal subunit, binds 16S rRNA. Zn(2+) is required as a cofactor.

The protein resides in the cytoplasm. Its function is as follows. One of several proteins that assist in the late maturation steps of the functional core of the 30S ribosomal subunit. Helps release RbfA from mature subunits. May play a role in the assembly of ribosomal proteins into the subunit. Circularly permuted GTPase that catalyzes slow GTP hydrolysis, GTPase activity is stimulated by the 30S ribosomal subunit. The sequence is that of Small ribosomal subunit biogenesis GTPase RsgA from Neisseria meningitidis serogroup C / serotype 2a (strain ATCC 700532 / DSM 15464 / FAM18).